The primary structure comprises 149 residues: Nucleoside diphosphate kinase (149 aa).

Positions 9, 57, 85, 91, 102, and 112 each coordinate ATP. The Pros-phosphohistidine intermediate role is filled by histidine 115.

The protein belongs to the NDK family. As to quaternary structure, homotetramer. Mg(2+) serves as cofactor.

The protein resides in the cytoplasm. The catalysed reaction is a 2'-deoxyribonucleoside 5'-diphosphate + ATP = a 2'-deoxyribonucleoside 5'-triphosphate + ADP. The enzyme catalyses a ribonucleoside 5'-diphosphate + ATP = a ribonucleoside 5'-triphosphate + ADP. Its function is as follows. Major role in the synthesis of nucleoside triphosphates other than ATP. The ATP gamma phosphate is transferred to the NDP beta phosphate via a ping-pong mechanism, using a phosphorylated active-site intermediate. The sequence is that of Nucleoside diphosphate kinase from Acaryochloris marina (strain MBIC 11017).